We begin with the raw amino-acid sequence, 659 residues long: Cyclic-di-AMP phosphodiesterase GdpP (659 aa).

Topologically, residues M1–P8 are cytoplasmic. 2 helical membrane passes run L9–F29 and Y30–I50. At K51–R659 the chain is on the cytoplasmic side. Positions P84 to K149 are PAS-like domain, required for heme-binding. A GGDEF domain is found at E173–P301. A DHH domain region spans residues N339 to I496. H345, D349, D351, D420, H444, and D499 together coordinate Mn(2+). The segment at F591 to K646 is DHHA1 domain.

It belongs to the GdpP/PdeA phosphodiesterase family. The cofactor is heme b. Mg(2+) is required as a cofactor. Requires Mn(2+) as cofactor.

The protein localises to the cell membrane. It carries out the reaction 3',3'-c-di-AMP + H2O = 5'-O-phosphonoadenylyl-(3'-&gt;5')-adenosine + H(+). Its activity is regulated as follows. Phosphodiesterase (PDE) inhibited by Zn(2+), Ca(2+) inhibits in the presence of Mg(2+) but not Mn(2+); c-di-AMP PDE activity is competitively inhibited by ppGpp. Heme binding (by Fe(2+) or Fe(3+) heme) inhibits PDE, activity is partially restored by KCN or NO only for Fe(2+) heme. Binding of NO to Fe(2+) heme switches from hexa- to pentacoordination. Heme binding inhibits the ATPase activity. Has phosphodiesterase (PDE) activity against cyclic-di-AMP (c-di-AMP) and to a much lesser extent against cyclic-di-GMP (c-di-GMP) in the DHH/DHHA1 domains. Also has ATPase activity, probably via the GGDEF domain. Overexpression leads to increased sensitivity to methyl methanesulfonate (MMS) and H(2)O(2). Overexpression leads to extreme sensitivity to the beta-lactam antibiotic cefuroxime (CEF), probably dependent on PDE activity. May monitor cellular heme or NO levels. In B.subtilis c-di-AMP is a second messenger that mediates growth, DNA repair and cell wall homeostasis; it is toxic when present in excess. The chain is Cyclic-di-AMP phosphodiesterase GdpP from Bacillus subtilis (strain 168).